Consider the following 504-residue polypeptide: Maturase K (504 aa).

It belongs to the intron maturase 2 family. MatK subfamily.

The protein localises to the plastid. Its subcellular location is the chloroplast. In terms of biological role, usually encoded in the trnK tRNA gene intron. Probably assists in splicing its own and other chloroplast group II introns. The chain is Maturase K from Amaranthus caudatus (Love-lies-bleeding).